Here is a 129-residue protein sequence, read N- to C-terminus: UPF0102 protein Mnod_0024 (129 aa).

Belongs to the UPF0102 family.

The protein is UPF0102 protein Mnod_0024 of Methylobacterium nodulans (strain LMG 21967 / CNCM I-2342 / ORS 2060).